The chain runs to 379 residues: Cytochrome b (379 aa).

The next 4 membrane-spanning stretches (helical) occupy residues 33-53, 77-98, 113-133, and 178-198; these read LGSLLGTCLIMQILTGLFLAM, WTIRHLHANGASMFFMCLYLHI, WNTGVMLLLTVMATAFMGYVL, and FFTLHFIAPFIILALVLTHLL. Residues His83 and His97 each contribute to the heme b site. His182 and His196 together coordinate heme b. His201 contacts a ubiquinone. 4 helical membrane passes run 226–246, 288–308, 320–340, and 347–367; these read IKDILGLLIMILTTLALTLLH, LGGVLTLICSILVLVIIPMTH, ISQCLFWILTADLLILTWIGG, and FTTIGLLASILYFTTILILTP.

This sequence belongs to the cytochrome b family. The cytochrome bc1 complex contains 11 subunits: 3 respiratory subunits (MT-CYB, CYC1 and UQCRFS1), 2 core proteins (UQCRC1 and UQCRC2) and 6 low-molecular weight proteins (UQCRH/QCR6, UQCRB/QCR7, UQCRQ/QCR8, UQCR10/QCR9, UQCR11/QCR10 and a cleavage product of UQCRFS1). This cytochrome bc1 complex then forms a dimer. It depends on heme b as a cofactor.

It is found in the mitochondrion inner membrane. Functionally, component of the ubiquinol-cytochrome c reductase complex (complex III or cytochrome b-c1 complex) that is part of the mitochondrial respiratory chain. The b-c1 complex mediates electron transfer from ubiquinol to cytochrome c. Contributes to the generation of a proton gradient across the mitochondrial membrane that is then used for ATP synthesis. This chain is Cytochrome b (MT-CYB), found in Bradypus tridactylus (Pale-throated three-toed sloth).